The sequence spans 407 residues: MKPTVWHHLRLCPHGHPDETIDDAAIAVDETGTIAWLGALSALPHGYAHWQREDLHGAWVTPGLVDCHTHLVYGGTRADEFAQRLAGVSYEEIARQGGGIVSTVRATRAADETTLFVQAAARLQPLLAEGVTAIEIKSGYGLDLASERKMLRVARQLGERFPVTVYTTFLGAHALPPEYAGRADEYIEEVCDRMLPTLADEGLVDAVDVFCERIGFSLAQTERVFEAATRRGLPVKLHAEQLSNAGGTALAARYRALSADHLEFLDEAGIEAMKAAGTVAVLLPGAYYFIRETQLPPIELLRKHGVPIALATDHNPGTSPLESLLLTLNMGCTLFRMTVPEVLQGVTRHAAAALGRADRHGALEVGRQADFAAWSVGSLAELAYWIGRPLCEQVVRGGTTVFRRMNG.

Positions 68 and 70 each coordinate Fe(3+). Zn(2+) is bound by residues histidine 68 and histidine 70. 3 residues coordinate 4-imidazolone-5-propanoate: arginine 77, tyrosine 140, and histidine 173. Tyrosine 140 contributes to the N-formimidoyl-L-glutamate binding site. Histidine 238 lines the Fe(3+) pocket. Histidine 238 provides a ligand contact to Zn(2+). Glutamine 241 serves as a coordination point for 4-imidazolone-5-propanoate. Aspartate 313 contributes to the Fe(3+) binding site. Residue aspartate 313 coordinates Zn(2+). Residues asparagine 315 and glycine 317 each coordinate N-formimidoyl-L-glutamate. Threonine 318 contacts 4-imidazolone-5-propanoate.

Belongs to the metallo-dependent hydrolases superfamily. HutI family. Zn(2+) serves as cofactor. Fe(3+) is required as a cofactor.

It is found in the cytoplasm. It catalyses the reaction 4-imidazolone-5-propanoate + H2O = N-formimidoyl-L-glutamate. Its pathway is amino-acid degradation; L-histidine degradation into L-glutamate; N-formimidoyl-L-glutamate from L-histidine: step 3/3. Functionally, catalyzes the hydrolytic cleavage of the carbon-nitrogen bond in imidazolone-5-propanoate to yield N-formimidoyl-L-glutamate. It is the third step in the universal histidine degradation pathway. The polypeptide is Imidazolonepropionase (Burkholderia orbicola (strain MC0-3)).